The chain runs to 26 residues: Hemocyanin subunit 3 (26 aa).

Belongs to the tyrosinase family. Hemocyanin subfamily. As to expression, hemolymph.

Its subcellular location is the secreted. It localises to the extracellular space. Functionally, hemocyanins are copper-containing oxygen carriers occurring freely dissolved in the hemolymph of many mollusks and arthropods. This chain is Hemocyanin subunit 3, found in Homarus americanus (American lobster).